The chain runs to 204 residues: WW domain-containing protein C11B10.08 (204 aa).

The WW domain maps to 7-43 (EGLPNGWVAQWDERYKCYFYVNESDPKAKPQWECPVR). Positions 32 to 117 (PKAKPQWECP…GYPQQPYYYP (86 aa)) are disordered. Composition is skewed to low complexity over residues 66–100 (YSNS…GAAP) and 108–117 (GYPQQPYYYP).

The protein resides in the cytoplasm. Its subcellular location is the nucleus. This chain is WW domain-containing protein C11B10.08, found in Schizosaccharomyces pombe (strain 972 / ATCC 24843) (Fission yeast).